The primary structure comprises 272 residues: TLC domain-containing protein 4 C (272 aa).

7 consecutive transmembrane segments (helical) span residues 16-36, 71-91, 103-123, 128-148, 155-175, 196-216, and 233-253; these read FSNSLYYRNSIFFSIIFFIIY, VSMIHAFLVLPFCIISAVESF, SLLMVLSISSGYFIWDLIICY, LVGTPMIIHAIMGLSSNIYVA, CFVPIVAILLITEISTIPLNM, FVITFLVSRCIIGLPFDIYLV, and VFITECGIQFFLNSYWSFLLI. Residues 61 to 261 form the TLC domain; it reads KKKLEWDQRV…LIKKLYQTYL (201 aa).

Belongs to the TLCD4 family.

It is found in the membrane. The protein is TLC domain-containing protein 4 C (tlcd4c) of Dictyostelium discoideum (Social amoeba).